The primary structure comprises 176 residues: Ribosome maturation factor RimM (176 aa).

Positions Glu-101–Leu-170 constitute a PRC barrel domain.

Belongs to the RimM family. As to quaternary structure, binds ribosomal protein uS19.

Its subcellular location is the cytoplasm. Its function is as follows. An accessory protein needed during the final step in the assembly of 30S ribosomal subunit, possibly for assembly of the head region. Essential for efficient processing of 16S rRNA. May be needed both before and after RbfA during the maturation of 16S rRNA. It has affinity for free ribosomal 30S subunits but not for 70S ribosomes. The protein is Ribosome maturation factor RimM of Solibacter usitatus (strain Ellin6076).